The primary structure comprises 151 residues: Macrodomain Ter protein (151 aa).

The protein belongs to the MatP family. As to quaternary structure, homodimer.

Its subcellular location is the cytoplasm. Functionally, required for spatial organization of the terminus region of the chromosome (Ter macrodomain) during the cell cycle. Prevents early segregation of duplicated Ter macrodomains during cell division. Binds specifically to matS, which is a 13 bp signature motif repeated within the Ter macrodomain. The sequence is that of Macrodomain Ter protein from Vibrio atlanticus (strain LGP32) (Vibrio splendidus (strain Mel32)).